A 500-amino-acid polypeptide reads, in one-letter code: Probable malate:quinone oxidoreductase (500 aa).

Belongs to the MQO family. It depends on FAD as a cofactor.

The catalysed reaction is (S)-malate + a quinone = a quinol + oxaloacetate. Its pathway is carbohydrate metabolism; tricarboxylic acid cycle; oxaloacetate from (S)-malate (quinone route): step 1/1. The protein is Probable malate:quinone oxidoreductase of Gluconobacter oxydans (strain 621H) (Gluconobacter suboxydans).